Reading from the N-terminus, the 901-residue chain is Translation initiation factor IF-2 (901 aa).

Residues 48-313 (HLNREHGGSS…SSLQQGFTKP (266 aa)) form a disordered region. Residues 68–82 (STLSVPGTGGKSKSV) show a composition bias toward polar residues. The segment covering 106–226 (ALAKREAEEQ…RMAEANEGKW (121 aa)) has biased composition (basic and acidic residues). Positions 263 to 277 (ARGRGGKAAKQKKGS) are enriched in basic residues. Residues 278–291 (KLSESKADREEARA) are compositionally biased toward basic and acidic residues. A tr-type G domain is found at 400 to 569 (PRAPVVTIMG…LLQAEVLELK (170 aa)). The tract at residues 409-416 (GHVDHGKT) is G1. 409 to 416 (GHVDHGKT) contacts GTP. Positions 434 to 438 (GITQH) are G2. Residues 455–458 (DTPG) form a G3 region. Residues 455–459 (DTPGH) and 509–512 (NKID) contribute to the GTP site. Residues 509–512 (NKID) are G4. A G5 region spans residues 545–547 (SAK).

This sequence belongs to the TRAFAC class translation factor GTPase superfamily. Classic translation factor GTPase family. IF-2 subfamily.

Its subcellular location is the cytoplasm. One of the essential components for the initiation of protein synthesis. Protects formylmethionyl-tRNA from spontaneous hydrolysis and promotes its binding to the 30S ribosomal subunits. Also involved in the hydrolysis of GTP during the formation of the 70S ribosomal complex. In Edwardsiella ictaluri (strain 93-146), this protein is Translation initiation factor IF-2.